Consider the following 371-residue polypeptide: uncharacterized protein (371 aa).

The 106-residue stretch at 43–148 (DESRVPKFYL…VQAFPTASNP (106 aa)) folds into the EH domain. The disordered stretch occupies residues 179-205 (SMRKKKESDSKEVSAHNSPAKGAAHDL).

This is an uncharacterized protein from Caenorhabditis elegans.